A 269-amino-acid chain; its full sequence is Formamidopyrimidine-DNA glycosylase (269 aa).

Catalysis depends on Pro-2, which acts as the Schiff-base intermediate with DNA. The active-site Proton donor is Glu-3. The active-site Proton donor; for beta-elimination activity is the Lys-57. Residues His-90, Arg-109, and Arg-150 each contribute to the DNA site. The FPG-type zinc-finger motif lies at 235 to 269; the sequence is NVYGRKGEPCEACGKAIESKVIGQRNTFFCTRCQR. Arg-259 (proton donor; for delta-elimination activity) is an active-site residue.

The protein belongs to the FPG family. As to quaternary structure, monomer. It depends on Zn(2+) as a cofactor.

The enzyme catalyses Hydrolysis of DNA containing ring-opened 7-methylguanine residues, releasing 2,6-diamino-4-hydroxy-5-(N-methyl)formamidopyrimidine.. The catalysed reaction is 2'-deoxyribonucleotide-(2'-deoxyribose 5'-phosphate)-2'-deoxyribonucleotide-DNA = a 3'-end 2'-deoxyribonucleotide-(2,3-dehydro-2,3-deoxyribose 5'-phosphate)-DNA + a 5'-end 5'-phospho-2'-deoxyribonucleoside-DNA + H(+). In terms of biological role, involved in base excision repair of DNA damaged by oxidation or by mutagenic agents. Acts as a DNA glycosylase that recognizes and removes damaged bases. Has a preference for oxidized purines, such as 7,8-dihydro-8-oxoguanine (8-oxoG). Has AP (apurinic/apyrimidinic) lyase activity and introduces nicks in the DNA strand. Cleaves the DNA backbone by beta-delta elimination to generate a single-strand break at the site of the removed base with both 3'- and 5'-phosphates. This Alteromonas mediterranea (strain DSM 17117 / CIP 110805 / LMG 28347 / Deep ecotype) protein is Formamidopyrimidine-DNA glycosylase.